A 206-amino-acid chain; its full sequence is Pyridoxine/pyridoxamine 5'-phosphate oxidase (206 aa).

FMN-binding positions include 53-58 (RMVLLK), 68-69 (YT), Lys75, and Gln97. Lys58 provides a ligand contact to substrate. 3 residues coordinate substrate: Tyr115, Arg119, and Ser123. Residues 132-133 (QS) and Trp177 each bind FMN. 183-185 (RLH) contacts substrate. Arg187 lines the FMN pocket.

Belongs to the pyridoxamine 5'-phosphate oxidase family. In terms of assembly, homodimer. The cofactor is FMN.

It catalyses the reaction pyridoxamine 5'-phosphate + O2 + H2O = pyridoxal 5'-phosphate + H2O2 + NH4(+). The enzyme catalyses pyridoxine 5'-phosphate + O2 = pyridoxal 5'-phosphate + H2O2. It functions in the pathway cofactor metabolism; pyridoxal 5'-phosphate salvage; pyridoxal 5'-phosphate from pyridoxamine 5'-phosphate: step 1/1. Its pathway is cofactor metabolism; pyridoxal 5'-phosphate salvage; pyridoxal 5'-phosphate from pyridoxine 5'-phosphate: step 1/1. Its function is as follows. Catalyzes the oxidation of either pyridoxine 5'-phosphate (PNP) or pyridoxamine 5'-phosphate (PMP) into pyridoxal 5'-phosphate (PLP). This chain is Pyridoxine/pyridoxamine 5'-phosphate oxidase, found in Sinorhizobium fredii (strain NBRC 101917 / NGR234).